The primary structure comprises 722 residues: MTELKPLLIELGTEELPVNALPNLSRAFFEGVLAGLERRGIVVDHGEAKSLSTPRRLAVLLTAVAVEQPKQYRELFGPYLNTAFDTEGKPTKALEGFAAKCGVNWRTLERIRDTKGERFVHRVVVPGERTDALLPGILTEAIAGMPIPKPMRWGAHEYLFARPVHWLVMLFGQDVVEAEIMGVKAGRISRGHRFLYDKPVSLSGPQNYIDVLQAAYVLVDPAARRARIVAEIEAVARQVGGVARITEDNVAQVVNLVEWPSAVLCSFERVFLEVPQEALIQTMEVNQKFFPVLDSLGKLTEKFIGIANIESNDVAEVAKGYERVIRPRFSDAKFFFNEDLKQGLKAMGERLRTVTYHAKLGTLADKVARVLVLAEAIAPQIGVDPLLARRVALLSKNDLQSRMVNEFPELQGVAGHHYALISGELPEVAMAIEDAYRPRFSGDEIARSPLGKVLGLAERLDTLACGFAVGMKPTGNKDPFGLRRNALGLARTIIESRFDLDLKVLLDQASDWVAFATTIEQERHAQESVKQSKKEAAVKHSVPQVSDEKSARIEELYDFIVERLRGYYADKGIPTTHFNAVAELKPVSLYDFHRRLDAIGRFAALPEAEALAVANKRIRNILRKAEIKIPASVDATLFDQPAESGLLVALEGVITDTRSALDCKNYVSVLTCLARLRPPIDEFFDKVMVNDENLMLRANRLALLQRLGEYLCCVAAIEHLSN.

It belongs to the class-II aminoacyl-tRNA synthetase family. In terms of assembly, tetramer of two alpha and two beta subunits.

The protein localises to the cytoplasm. The catalysed reaction is tRNA(Gly) + glycine + ATP = glycyl-tRNA(Gly) + AMP + diphosphate. The chain is Glycine--tRNA ligase beta subunit from Xylella fastidiosa (strain Temecula1 / ATCC 700964).